A 530-amino-acid polypeptide reads, in one-letter code: MSLKWMSVFLLMQLSCYFSSGSCGKVLVWPTEYSHWINMKTILEELVQRGHEVIVLTSSASILVNASKSSAIKLEVYPTSLTKNDLEDFFMKMFDRWTYSISKNTFWSYFSQLQELCWEYSDYNIKLCEDAVLNKKLMRKLQESKFDVLLADAVNPCGELLAELLNIPFLYSLRFSVGYTVEKNGGGFLFPPSYVPVVMSELSDQMIFMERIKNMIYMLYFDFWFQAYDLKKWDQFYSEVLGRPTTLFETMGKAEMWLIRTYWDFEFPRPFLPNVDFVGGLHCKPAKPLPKEMEEFVQSSGENGIVVFSLGSMISNMSEESANMIASALAQIPQKVLWRFDGKKPNTLGSNTRLYKWLPQNDLLGHPKTKAFITHGGTNGIYEAIYHGIPMVGIPLFADQHDNIAHMKAKGAALSVDIRTMSSRDLLNALKSVINDPIYKENIMKLSRIHHDQPVKPLDRAVFWIEFVMRHKGAKHLRVAAHNLTWIQYHSLDVIAFLLACVATMIFMITKCCLFCFRKLAKTGKKKKRD.

A signal peptide spans 1-23 (MSLKWMSVFLLMQLSCYFSSGSC). A glycan (N-linked (GlcNAc...) asparagine) is linked at asparagine 65. The residue at position 136 (lysine 136) is an N6-succinyllysine. Residues asparagine 316 and asparagine 483 are each glycosylated (N-linked (GlcNAc...) asparagine). A helical transmembrane segment spans residues 495–515 (IAFLLACVATMIFMITKCCLF).

This sequence belongs to the UDP-glycosyltransferase family. Expressed in various tissues including the liver, kidney, testis, uterus, placenta, mammary gland, adrenal gland, skin and prostate.

It is found in the endoplasmic reticulum membrane. It carries out the reaction glucuronate acceptor + UDP-alpha-D-glucuronate = acceptor beta-D-glucuronoside + UDP + H(+). It catalyses the reaction 17alpha-estradiol + UDP-alpha-D-glucuronate = 17alpha-estradiol 3-O-(beta-D-glucuronate) + UDP + H(+). The enzyme catalyses 17alpha-estradiol + UDP-alpha-D-glucuronate = 17alpha-estradiol 17-O-(beta-D-glucuronate) + UDP + H(+). The catalysed reaction is 17beta-estradiol + UDP-alpha-D-glucuronate = 17beta-estradiol 17-O-(beta-D-glucuronate) + UDP + H(+). It carries out the reaction 17beta-hydroxy-5alpha-androstan-3-one + UDP-alpha-D-glucuronate = 5alpha-dihydrotestosterone 17-O-(beta-D-glucuronate) + UDP + H(+). It catalyses the reaction testosterone + UDP-alpha-D-glucuronate = testosterone 17-O-(beta-D-glucuronate) + UDP + H(+). UDP-glucuronosyltransferase (UGT) that catalyzes phase II biotransformation reactions in which lipophilic substrates are conjugated with glucuronic acid to increase the metabolite's water solubility, thereby facilitating excretion into either the urine or bile. Catalyzes the glucuronidation of endogenous steroid hormones such as androgens (epitestosterone, androsterone) and estrogens (estradiol, epiestradiol). This chain is UDP-glucuronosyltransferase 2B17, found in Homo sapiens (Human).